Reading from the N-terminus, the 167-residue chain is 6,7-dimethyl-8-ribityllumazine synthase (167 aa).

5-amino-6-(D-ribitylamino)uracil contacts are provided by residues F26, 60-62 (AFE), and 89-91 (AII). A (2S)-2-hydroxy-3-oxobutyl phosphate-binding site is contributed by 94–95 (ET). The active-site Proton donor is the H97. Residue F122 participates in 5-amino-6-(D-ribitylamino)uracil binding. Position 136 (R136) interacts with (2S)-2-hydroxy-3-oxobutyl phosphate.

This sequence belongs to the DMRL synthase family. In terms of assembly, forms an icosahedral capsid composed of 60 subunits, arranged as a dodecamer of pentamers.

The catalysed reaction is (2S)-2-hydroxy-3-oxobutyl phosphate + 5-amino-6-(D-ribitylamino)uracil = 6,7-dimethyl-8-(1-D-ribityl)lumazine + phosphate + 2 H2O + H(+). It functions in the pathway cofactor biosynthesis; riboflavin biosynthesis; riboflavin from 2-hydroxy-3-oxobutyl phosphate and 5-amino-6-(D-ribitylamino)uracil: step 1/2. Catalyzes the formation of 6,7-dimethyl-8-ribityllumazine by condensation of 5-amino-6-(D-ribitylamino)uracil with 3,4-dihydroxy-2-butanone 4-phosphate. This is the penultimate step in the biosynthesis of riboflavin. This chain is 6,7-dimethyl-8-ribityllumazine synthase, found in Ruthia magnifica subsp. Calyptogena magnifica.